The chain runs to 156 residues: 6,7-dimethyl-8-ribityllumazine synthase (156 aa).

5-amino-6-(D-ribitylamino)uracil contacts are provided by residues Phe23, 57–59, and 81–83; these read SWE and AVV. 86–87 provides a ligand contact to (2S)-2-hydroxy-3-oxobutyl phosphate; it reads ET. His89 functions as the Proton donor in the catalytic mechanism. 5-amino-6-(D-ribitylamino)uracil is bound at residue Phe114. Arg128 is a binding site for (2S)-2-hydroxy-3-oxobutyl phosphate.

The protein belongs to the DMRL synthase family.

It catalyses the reaction (2S)-2-hydroxy-3-oxobutyl phosphate + 5-amino-6-(D-ribitylamino)uracil = 6,7-dimethyl-8-(1-D-ribityl)lumazine + phosphate + 2 H2O + H(+). Its pathway is cofactor biosynthesis; riboflavin biosynthesis; riboflavin from 2-hydroxy-3-oxobutyl phosphate and 5-amino-6-(D-ribitylamino)uracil: step 1/2. Functionally, catalyzes the formation of 6,7-dimethyl-8-ribityllumazine by condensation of 5-amino-6-(D-ribitylamino)uracil with 3,4-dihydroxy-2-butanone 4-phosphate. This is the penultimate step in the biosynthesis of riboflavin. The sequence is that of 6,7-dimethyl-8-ribityllumazine synthase from Salinibacter ruber (strain DSM 13855 / M31).